The sequence spans 60 residues: Large ribosomal subunit protein uL30 (60 aa).

The protein belongs to the universal ribosomal protein uL30 family. Part of the 50S ribosomal subunit.

The sequence is that of Large ribosomal subunit protein uL30 from Salinispora arenicola (strain CNS-205).